Consider the following 304-residue polypeptide: Polyisoprenyl-teichoic acid--peptidoglycan teichoic acid transferase TagU (304 aa).

Topologically, residues 1–4 (MKKK) are cytoplasmic. The chain crosses the membrane as a helical; Signal-anchor for type II membrane protein span at residues 5 to 25 (ILFWILGIIGIMIIGGGVYAY). At 26–304 (NVYSSVSKTL…KLRAHLELTK (279 aa)) the chain is on the extracellular side.

The protein belongs to the LytR/CpsA/Psr (LCP) family.

The protein localises to the cell membrane. Its pathway is cell wall biogenesis. May catalyze the final step in cell wall teichoic acid biosynthesis, the transfer of the anionic cell wall polymers (APs) from their lipid-linked precursor to the cell wall peptidoglycan (PG). The sequence is that of Polyisoprenyl-teichoic acid--peptidoglycan teichoic acid transferase TagU from Bacillus mycoides (strain KBAB4) (Bacillus weihenstephanensis).